The primary structure comprises 437 residues: Transmembrane protease serine 4 (437 aa).

Residues 1-32 (MLQDPDSDQPLNSLDVKPLRKPRIPMETFRKV) are Cytoplasmic-facing. A helical; Signal-anchor for type II membrane protein membrane pass occupies residues 33–53 (GIPIIIALLSLASIIIVVVLI). Topologically, residues 54–437 (KVILDKYYFL…WIYNVWKAEL (384 aa)) are extracellular. An LDL-receptor class A domain is found at 61 to 93 (YFLCGQPLHFIPRKQLCDGELDCPLGEDEEHCV). 8 cysteine pairs are disulfide-bonded: Cys-64/Cys-83, Cys-77/Cys-92, Cys-127/Cys-183, Cys-140/Cys-193, Cys-196/Cys-310, Cys-230/Cys-246, Cys-356/Cys-372, and Cys-383/Cys-410. In terms of domain architecture, SRCR spans 94 to 204 (KSFPEGPAVA…ACGKSLKTPR (111 aa)). Residues Asn-130 and Asn-178 are each glycosylated (N-linked (GlcNAc...) asparagine). The region spanning 205 to 434 (VVGVEEASVD…YLNWIYNVWK (230 aa)) is the Peptidase S1 domain. Active-site charge relay system residues include His-245 and Asp-290. Catalysis depends on Ser-387, which acts as the Charge relay system.

It belongs to the peptidase S1 family. In terms of processing, proteolytically processed; probably by an autocatalytic mechanism. As to expression, high levels in pancreatic, gastric, colorectal and ampullary cancer. Very weak expression in normal gastrointestinal and urogenital tract. Coexpressed with ACE2 within mature enterocytes.

Its subcellular location is the cell membrane. The protein localises to the secreted. Plasma membrane-anchored serine protease that directly induces processing of pro-uPA/PLAU into the active form through proteolytic activity. Seems to be capable of activating ENaC. Functionally, (Microbial infection) In gut epithelial cells, facilitates human coronavirus SARS-CoV-2 infection through, at least, the cleavage of coronavirus spike glycoproteins which activates the glycoprotein for host cell entry. The sequence is that of Transmembrane protease serine 4 from Homo sapiens (Human).